The following is a 669-amino-acid chain: Very long-chain fatty acid transport protein (669 aa).

Over 1 to 5 (MSPIQ) the chain is Cytoplasmic. A helical membrane pass occupies residues 6 to 26 (VVVFALSRIFLLLFRLIKLII). The Extracellular portion of the chain corresponds to 27–148 (TPIQKSLGYL…YVAIDCTNKP (122 aa)). A helical transmembrane segment spans residues 149–169 (LFVFLWLSLWNIGAIPAFLNY). Residues 170-270 (NTKGTPLVHS…TGLPKSAIMS (101 aa)) are Cytoplasmic-facing. 256–267 (YTSGTTGLPKSA) contacts ATP. An intramembrane segment occupies 271–339 (WRKSSVGCQV…FWKQVYLTGA (69 aa)). Residues 340 to 669 (THIQYVGEVC…EAIDAQTIKL (330 aa)) lie on the Cytoplasmic side of the membrane. Residues 501–551 (DAWYRCGDLLKADEYGLWYFLDRMGDTFRWKSENVSTTEVEDQLTASNKEQ) carry the FACS motif. The short motif at 667 to 669 (IKL) is the C-terminal peroxisome targeting signal (PTS1) element.

It belongs to the ATP-dependent AMP-binding enzyme family. Interacts with fatty acyl-CoA synthetases FAA1 and FAA4.

The protein resides in the lipid droplet. It localises to the cell membrane. Its subcellular location is the peroxisome membrane. It is found in the peroxisome. It catalyses the reaction a very long-chain fatty acid + ATP + CoA = a very long-chain fatty acyl-CoA + AMP + diphosphate. It carries out the reaction tetracosanoate + ATP + CoA = tetracosanoyl-CoA + AMP + diphosphate. Functionally, acyl-CoA synthetase required for both the import of long chain fatty acids (LCFAs) (C14-C18) and the activation very long chain fatty acids (VLCFAs) (C20-C26) by esterification of the fatty acids into metabolically active CoA-thioesters for subsequent degradation or incorporation into phospholipids. The transport and fatty acyl-CoA synthetase activities are genetically separable and are thus independent activities. Esterifies VLCFAs in the peroxisome matrix. The VLCFAs are actively transported into peroxisomes by a PXA1-PXA2 heterodimeric transporter in the peroxisomal membrane. The chain is Very long-chain fatty acid transport protein (FAT1) from Saccharomyces cerevisiae (strain ATCC 204508 / S288c) (Baker's yeast).